The sequence spans 367 residues: Choline-phosphate cytidylyltransferase A (367 aa).

Methionine 1 carries the N-acetylmethionine modification. Residues 1–31 (MDAQSSAKVNSRKRRKEVPGPNGATEEDGIP) form a disordered region. The residue at position 8 (lysine 8) is an N6-acetyllysine. CTP-binding residues include isoleucine 84, phenylalanine 85, histidine 92, and lysine 122. Phosphocholine is bound by residues lysine 122 and tryptophan 151. The CTP site is built by histidine 168, aspartate 169, tyrosine 173, glutamine 195, arginine 196, threonine 197, and isoleucine 200. Amphipathic stretches follow at residues 228-287 (KELN…EFIG) and 298-315 (ALKHMLKEGKGRMLQAIS). At serine 233 the chain carries Phosphoserine. The segment at 272–293 (IDLIQKWEEKSREFIGSFLEMF) is autoinhibitory (AI). A disordered region spans residues 313-367 (AISPKQSPSSSPTHERSPSPSFRWPFSGKTSPSSSPASLSRCKAVTCDISEDEED). Serine 315 carries the post-translational modification Phosphoserine; by PKC. Residues 315–324 (SPKQSPSSSP) show a composition bias toward polar residues. Phosphoserine occurs at positions 319, 321, 322, and 323. Repeat 1 spans residues 319–324 (SPSSSP). The 3 X repeats stretch occupies residues 319–348 (SPSSSPTHERSPSPSFRWPFSGKTSPSSSP). A Phosphothreonine modification is found at threonine 325. 2 positions are modified to phosphoserine: serine 329 and serine 331. A 2; approximate repeat occupies 329-333 (SPSPS). Residues 330 to 352 (PSPSFRWPFSGKTSPSSSPASLS) are compositionally biased toward low complexity. A Phosphoserine; by PKC modification is found at serine 333. Threonine 342 is modified (phosphothreonine). Phosphoserine occurs at positions 343, 345, 346, 347, 350, and 352. Repeat unit 3 spans residues 343–348 (SPSSSP). Threonine 358 carries the post-translational modification Phosphothreonine. Serine 362 is modified (phosphoserine; by CK2).

It belongs to the cytidylyltransferase family. In terms of assembly, homodimer. In terms of processing, the serine residues of the C-terminus are phosphorylated. The inactive soluble form is stabilized by phosphorylation, the active membrane bound form is promoted by anionic lipids or diacylglycerol, and is stabilized by dephosphorylation. Post-translationally, the N-terminus is blocked. Monoubiquitinated by the SCF(FBXL2) complex, leading to proteasomal degradation.

It is found in the cytoplasm. Its subcellular location is the cytosol. The protein resides in the membrane. The protein localises to the endoplasmic reticulum membrane. It localises to the nucleus. It carries out the reaction phosphocholine + CTP + H(+) = CDP-choline + diphosphate. It participates in phospholipid metabolism; phosphatidylcholine biosynthesis; phosphatidylcholine from phosphocholine: step 1/2. With respect to regulation, interconverts between an inactive cytosolic form and an active membrane-bound form. Activation involves disruption of an inhibitory interaction between helices at the base of the active site and the autoinhibitory (AI) region. Activated by N-methylethanolamine. Activated by oleic acid-containing phosphatidylcholine vesicles. Its function is as follows. Catalyzes the key rate-limiting step in the CDP-choline pathway for phosphatidylcholine biosynthesis. The chain is Choline-phosphate cytidylyltransferase A (Pcyt1a) from Rattus norvegicus (Rat).